Reading from the N-terminus, the 359-residue chain is Phospho-N-acetylmuramoyl-pentapeptide-transferase (359 aa).

10 consecutive transmembrane segments (helical) span residues 3 to 23 (QILI…PVLI), 55 to 75 (VAIL…GLAL), 84 to 104 (GLLV…DDLI), 120 to 140 (TVGI…FGNA), 156 to 176 (IATV…LVSA), 187 to 207 (LDGL…LITF), 231 to 251 (LALV…WNAA), 255 to 275 (IFMG…LSVT), 280 to 300 (ILAV…VVQI), and 334 to 354 (FWLL…GEWL).

This sequence belongs to the glycosyltransferase 4 family. MraY subfamily. Requires Mg(2+) as cofactor.

The protein resides in the cell membrane. It catalyses the reaction UDP-N-acetyl-alpha-D-muramoyl-L-alanyl-gamma-D-glutamyl-meso-2,6-diaminopimeloyl-D-alanyl-D-alanine + di-trans,octa-cis-undecaprenyl phosphate = di-trans,octa-cis-undecaprenyl diphospho-N-acetyl-alpha-D-muramoyl-L-alanyl-D-glutamyl-meso-2,6-diaminopimeloyl-D-alanyl-D-alanine + UMP. Its pathway is cell wall biogenesis; peptidoglycan biosynthesis. Catalyzes the initial step of the lipid cycle reactions in the biosynthesis of the cell wall peptidoglycan: transfers peptidoglycan precursor phospho-MurNAc-pentapeptide from UDP-MurNAc-pentapeptide onto the lipid carrier undecaprenyl phosphate, yielding undecaprenyl-pyrophosphoryl-MurNAc-pentapeptide, known as lipid I. The sequence is that of Phospho-N-acetylmuramoyl-pentapeptide-transferase from Mycobacterium sp. (strain JLS).